Here is a 789-residue protein sequence, read N- to C-terminus: Cell pattern formation-associated protein stuA (789 aa).

2 disordered regions span residues Pro50–Gly131 and Pro205–Ser224. Polar residues-rich tracts occupy residues Pro55–Thr69, Ala76–Gly88, and Leu115–Gly131. The 107-residue stretch at Arg272 to Pro378 folds into the HTH APSES-type domain. Positions Gly306–Glu327 form a DNA-binding region, H-T-H motif. Disordered stretches follow at residues Gln389–Leu459, Ser487–Gln543, and His616–Arg789. Composition is skewed to polar residues over residues Leu419–Ala438, Ser487–Tyr529, Gly620–Val636, Gln645–Thr667, and Ser676–Ser713. A nuclear localization domain region spans residues Lys731–Lys758. A compositionally biased stretch (basic and acidic residues) spans Gln741–Ser754.

The protein belongs to the EFG1/PHD1/stuA family.

The protein localises to the nucleus. Transcription factor that regulates asexual reproduction. Binds the StuA-response elements (StRE) with the consensus sequence 5'-(A/T)CGCG(T/A)N(A/C)-3' at the promoters of target genes. This chain is Cell pattern formation-associated protein stuA, found in Aspergillus flavus (strain ATCC 200026 / FGSC A1120 / IAM 13836 / NRRL 3357 / JCM 12722 / SRRC 167).